The primary structure comprises 318 residues: 2,4-dinitroanisole O-demethylase subunit beta (318 aa).

This sequence belongs to the metallo-beta-lactamase superfamily. Part of the complex DnhAB composed of the 2,4-dinitroanisole O-demethylase alpha (DnhA) and beta (DnhB) subunits.

The catalysed reaction is 2,4-dinitroanisole + H2O = 2,4-dinitrophenol + methanol + H(+). In terms of biological role, involved in the degradation of 2,4-dinitroanisole (DNAN), an insensitive munition ingredient used in explosive formulations as a replacement for 2,4,6-trinitrotoluene (TNT). Catalyzes the removal of the methyl group from 2,4-dinitroanisole (DNAN) to yield 2,4-dinitrophenol (2,4-DNP) and methanol. The protein is 2,4-dinitroanisole O-demethylase subunit beta of Nocardioides sp. (strain JS1661).